The sequence spans 117 residues: Immunoglobulin heavy variable 5-10-1 (117 aa).

Residues 1–19 form the signal peptide; the sequence is MGSTAILALLLAVLQGVCA. Positions 20 to 44 are framework-1; sequence EVQLVQSGAEVKKPGESLRISCKGS. Residues 20–117 enclose the Ig-like domain; it reads EVQLVQSGAE…SDTAMYYCAR (98 aa). A disulfide bridge connects residues C41 and C115. The interval 45–52 is complementarity-determining-1; it reads GYSFTSYW. The framework-2 stretch occupies residues 53–69; sequence ISWVRQMPGKGLEWMGR. Positions 70–77 are complementarity-determining-2; it reads IDPSDSYT. Positions 78–115 are framework-3; sequence NYSPSFQGHVTISADKSISTAYLQWSSLKASDTAMYYC. Positions 116-117 are complementarity-determining-3; it reads AR.

Immunoglobulins are composed of two identical heavy chains and two identical light chains; disulfide-linked.

Its subcellular location is the secreted. The protein resides in the cell membrane. In terms of biological role, v region of the variable domain of immunoglobulin heavy chains that participates in the antigen recognition. Immunoglobulins, also known as antibodies, are membrane-bound or secreted glycoproteins produced by B lymphocytes. In the recognition phase of humoral immunity, the membrane-bound immunoglobulins serve as receptors which, upon binding of a specific antigen, trigger the clonal expansion and differentiation of B lymphocytes into immunoglobulins-secreting plasma cells. Secreted immunoglobulins mediate the effector phase of humoral immunity, which results in the elimination of bound antigens. The antigen binding site is formed by the variable domain of one heavy chain, together with that of its associated light chain. Thus, each immunoglobulin has two antigen binding sites with remarkable affinity for a particular antigen. The variable domains are assembled by a process called V-(D)-J rearrangement and can then be subjected to somatic hypermutations which, after exposure to antigen and selection, allow affinity maturation for a particular antigen. This chain is Immunoglobulin heavy variable 5-10-1, found in Homo sapiens (Human).